Consider the following 187-residue polypeptide: Early E3 20.6 kDa glycoprotein (187 aa).

N-linked (GlcNAc...) asparagine; by host glycans are attached at residues Asn-30, Asn-73, Asn-117, Asn-134, and Asn-135.

The protein belongs to the adenoviridae E3_20 family.

The protein is Early E3 20.6 kDa glycoprotein of Human adenovirus B serotype 11 (strain Slobiski) (HAdV-11).